Here is a 324-residue protein sequence, read N- to C-terminus: MNLKKVVNEIRNFEGILRKIAIKDVVETFDFNDEDYEFDIIVDFGDDAAVIGIDGDNAILLAADGIWGKLLEADPWWAGYCSVLVNCKDIAAMGGKCVGMTNIISIKDKDICREVLKGVKDGVKKFGVPMVGGHTHPDAMCNVLDVSITGIAKKDCILRSDNAKIGDKIIFAYDLVGQIYKSFPLNWDTTTMKSKKLVRAQMDALVQIAENKLANSCKDISNPGAIGTLGMLLEVSRKGGVVDITKIPKPEEIDLIHWLKVYPGSGYVLTAKEENFKEIKDIFEDVEMTAEICGEVIAEKKLYITDGENKEVVFDFEKEFICGC.

This is an uncharacterized protein from Methanocaldococcus jannaschii (strain ATCC 43067 / DSM 2661 / JAL-1 / JCM 10045 / NBRC 100440) (Methanococcus jannaschii).